A 148-amino-acid chain; its full sequence is Cytochrome c-type biogenesis protein CcmE (148 aa).

At 1–7 the chain is on the cytoplasmic side; that stretch reads MKPRNRR. A helical; Signal-anchor for type II membrane protein transmembrane segment spans residues 8 to 28; sequence IALIVAGLSALGIATALVLNA. The Periplasmic segment spans residues 29-148; sequence FQSNLVFFFT…VQKKPASRKP (120 aa). Heme contacts are provided by histidine 123 and tyrosine 127. The segment at 128–148 is disordered; that stretch reads MPPEAQHALDEVQKKPASRKP.

It belongs to the CcmE/CycJ family.

The protein localises to the cell inner membrane. Its function is as follows. Heme chaperone required for the biogenesis of c-type cytochromes. Transiently binds heme delivered by CcmC and transfers the heme to apo-cytochromes in a process facilitated by CcmF and CcmH. The protein is Cytochrome c-type biogenesis protein CcmE of Pseudomonas aeruginosa.